A 306-amino-acid chain; its full sequence is Aspartate carbamoyltransferase catalytic subunit (306 aa).

Carbamoyl phosphate contacts are provided by Arg55 and Thr56. Lys84 contacts L-aspartate. Carbamoyl phosphate contacts are provided by Arg105, His133, and Gln136. The L-aspartate site is built by Arg166 and Arg227. Carbamoyl phosphate is bound by residues Leu265 and Pro266.

The protein belongs to the aspartate/ornithine carbamoyltransferase superfamily. ATCase family. In terms of assembly, heterododecamer (2C3:3R2) of six catalytic PyrB chains organized as two trimers (C3), and six regulatory PyrI chains organized as three dimers (R2).

The enzyme catalyses carbamoyl phosphate + L-aspartate = N-carbamoyl-L-aspartate + phosphate + H(+). The protein operates within pyrimidine metabolism; UMP biosynthesis via de novo pathway; (S)-dihydroorotate from bicarbonate: step 2/3. Catalyzes the condensation of carbamoyl phosphate and aspartate to form carbamoyl aspartate and inorganic phosphate, the committed step in the de novo pyrimidine nucleotide biosynthesis pathway. This is Aspartate carbamoyltransferase catalytic subunit from Neisseria meningitidis serogroup C (strain 053442).